The chain runs to 1894 residues: Fibronectin type III domain-containing protein 1 (1894 aa).

The N-terminal stretch at 1 to 32 (MAPEAGATLRAPRRLSWAALLLLAALLPVASS) is a signal peptide. The Fibronectin type-III 1 domain maps to 39–131 (HPLKPRHVKL…PVYRAESPPG (93 aa)). N-linked (GlcNAc...) asparagine glycosylation is present at asparagine 149. Fibronectin type-III domains follow at residues 158–258 (PNKP…SEED), 262–357 (VPDD…TPES), and 362–457 (APEN…MPTT). Disordered regions lie at residues 455 to 500 (PTTS…PQGR), 515 to 1271 (ANGG…TVSP), 1311 to 1350 (LSRQ…IING), and 1444 to 1515 (THPP…CPPG). Over residues 565–574 (TLRPPSRHGH) the composition is skewed to basic residues. Low complexity predominate over residues 614–625 (PSASASPAHHAS). Over residues 626–641 (TQGTSHRPSLPASLND) the composition is skewed to polar residues. 2 stretches are compositionally biased toward low complexity: residues 711 to 722 (SASAPPSRLSPP) and 759 to 778 (SRST…TQVS). At serine 717 the chain carries Phosphoserine. The span at 786 to 799 (GESHGDGDREDGGR) shows a compositional bias: basic and acidic residues. Composition is skewed to polar residues over residues 941 to 957 (KYSS…QSTD) and 1027 to 1060 (SPSQ…TASS). Over residues 1071-1088 (QDEDAQGSYDDDSTEVEA) the composition is skewed to acidic residues. A compositionally biased stretch (polar residues) spans 1166–1176 (PLSSKSQQSVS). Low complexity predominate over residues 1197–1209 (SSSVPKWPSSSTP). Positions 1211-1226 (GGKDADGSLAKEEREP) are enriched in basic and acidic residues. The segment covering 1445 to 1504 (HPPTTTMQPTTTTTPLPTTTTPRPTTATTRRTTTTRRTTTRRPTTTVRTTTRTTTTTTPT) has biased composition (low complexity). The Fibronectin type-III 5 domain occupies 1658-1752 (APRNITVVAV…PSVSFVTESD (95 aa)). An N-linked (GlcNAc...) asparagine glycan is attached at asparagine 1661.

As to expression, almost absent from healthy skin; especially in epidermal keratinocytes, skin fibroblasts or endothelial cells and is barely detectable in benign melanocytic naevi. Expressed in the stroma close to skin tumors, in the tumor cells themselves and in the epidermis of psoriasis.

Its subcellular location is the secreted. Its function is as follows. May be an activator of G protein signaling. The chain is Fibronectin type III domain-containing protein 1 (FNDC1) from Homo sapiens (Human).